The following is a 77-amino-acid chain: Acyl carrier protein (77 aa).

The Carrier domain occupies 1–76 (MSIEERVKKI…SAIDYVTKAN (76 aa)). O-(pantetheine 4'-phosphoryl)serine is present on S36.

The protein belongs to the acyl carrier protein (ACP) family. 4'-phosphopantetheine is transferred from CoA to a specific serine of apo-ACP by AcpS. This modification is essential for activity because fatty acids are bound in thioester linkage to the sulfhydryl of the prosthetic group.

Its subcellular location is the cytoplasm. It participates in lipid metabolism; fatty acid biosynthesis. Its function is as follows. Carrier of the growing fatty acid chain in fatty acid biosynthesis. In Actinobacillus pleuropneumoniae serotype 5b (strain L20), this protein is Acyl carrier protein.